We begin with the raw amino-acid sequence, 374 residues long: MSDKTKNTKPVAELSVEQVKEALIEEGKKKGILTYAKIAARLAPFTLDSDQMDEYLEHVGEAGIEVSDDADDEDPDETELVKEETESFDLTDMSVPPGVKINDPVRMYLKEIGRVDLLTADEEIALAKRIEAGDIEAKGRLAEANLRLVVSIAKRYVGRGMLFLDLIQEGNMGLMKAVEKFDFNKGFKFSTYATWWIRQAITRAIADQARTIRIPVHMVETINKLIRVQRSLLQDLGRDPSPEEIGEEMDLPTEKVREILKIAQEPVSLETPIGEEDDSHLGDFIEDQDATSPSDHAAYELLKEQLEDVLDTLTDREENVLRLRFGLDDGRTRTLEEVGRVFGVTRERIRQIEAKALRKLRHPSRSKQLKDFLE.

The interval 141–211 is sigma-70 factor domain-2; the sequence is LAEANLRLVV…TRAIADQART (71 aa). The Interaction with polymerase core subunit RpoC signature appears at 165–168; it reads DLIQ. Residues 220 to 296 are sigma-70 factor domain-3; it reads ETINKLIRVQ…DQDATSPSDH (77 aa). Residues 309–362 are sigma-70 factor domain-4; sequence VLDTLTDREENVLRLRFGLDDGRTRTLEEVGRVFGVTRERIRQIEAKALRKLRH. The H-T-H motif DNA-binding region spans 335–354; the sequence is LEEVGRVFGVTRERIRQIEA.

Belongs to the sigma-70 factor family. RpoD/SigA subfamily. Interacts transiently with the RNA polymerase catalytic core.

It is found in the cytoplasm. Functionally, sigma factors are initiation factors that promote the attachment of RNA polymerase to specific initiation sites and are then released. This sigma factor is the primary sigma factor during exponential growth. In Listeria monocytogenes serovar 1/2a (strain ATCC BAA-679 / EGD-e), this protein is RNA polymerase sigma factor SigA.